A 500-amino-acid chain; its full sequence is Cytochrome P450 11B2, mitochondrial (500 aa).

The N-terminal 24 residues, 1–24 (MALRVTADVWLARPWQCLHRTRAL), are a transit peptide targeting the mitochondrion. F381 serves as a coordination point for 21-hydroxyprogesterone. C447 lines the heme pocket.

This sequence belongs to the cytochrome P450 family. Requires heme as cofactor.

The protein resides in the mitochondrion inner membrane. It carries out the reaction a steroid + 2 reduced [adrenodoxin] + O2 + 2 H(+) = an 11beta-hydroxysteroid + 2 oxidized [adrenodoxin] + H2O. The catalysed reaction is 21-hydroxyprogesterone + 2 reduced [adrenodoxin] + O2 + 2 H(+) = corticosterone + 2 oxidized [adrenodoxin] + H2O. It catalyses the reaction corticosterone + 2 reduced [adrenodoxin] + O2 + 2 H(+) = 18-hydroxycorticosterone + 2 oxidized [adrenodoxin] + H2O. The enzyme catalyses 18-hydroxycorticosterone + 2 reduced [adrenodoxin] + O2 + 2 H(+) = aldosterone + 2 oxidized [adrenodoxin] + 2 H2O. It carries out the reaction 11-deoxycortisol + 2 reduced [adrenodoxin] + O2 + 2 H(+) = cortisol + 2 oxidized [adrenodoxin] + H2O. The catalysed reaction is 21-hydroxyprogesterone + 2 reduced [adrenodoxin] + O2 + 2 H(+) = 18-hydroxy-11-deoxycorticosterone + 2 oxidized [adrenodoxin] + H2O. It catalyses the reaction cortisol + 2 reduced [adrenodoxin] + O2 + 2 H(+) = 18-hydroxycortisol + 2 oxidized [adrenodoxin] + H2O. The enzyme catalyses 18-hydroxycortisol + 2 reduced [adrenodoxin] + O2 + 2 H(+) = 18-oxocortisol + 2 oxidized [adrenodoxin] + 2 H2O. It functions in the pathway steroid biosynthesis. Its function is as follows. A cytochrome P450 monooxygenase that catalyzes the biosynthesis of aldosterone, the main mineralocorticoid in the human body responsible for salt and water homeostasis, thus involved in blood pressure regulation, arterial hypertension, and the development of heart failure. Catalyzes three sequential oxidative reactions of 11-deoxycorticosterone (21-hydroxyprogesterone), namely 11-beta hydroxylation, followed by two successive oxidations at C18 yielding 18-hydroxy and then 18-oxo intermediates (that would not leave the enzyme active site during the consecutive hydroxylation reactions), ending with the formation of aldosterone. Can also produce 18-hydroxycortisol and 18-oxocortisol, derived from successive oxidations of cortisol at C18, normally found at very low levels, but significantly increased in primary aldosteronism, the most common form of secondary hypertension. Mechanistically, uses molecular oxygen inserting one oxygen atom into a substrate and reducing the second into a water molecule. Two electrons are provided by NADPH via a two-protein mitochondrial transfer system comprising flavoprotein FDXR (adrenodoxin/ferredoxin reductase) and nonheme iron-sulfur protein FDX1 or FDX2 (adrenodoxin/ferredoxin). Could also be involved in the androgen metabolic pathway. The sequence is that of Cytochrome P450 11B2, mitochondrial (Cyp11b2) from Mus musculus (Mouse).